The chain runs to 407 residues: Argininosuccinate synthase (407 aa).

Residues 10–18 (AYSGGLDTS) and A37 contribute to the ATP site. L-citrulline contacts are provided by Y88 and S93. Residue G118 coordinates ATP. L-aspartate is bound by residues T120, N124, and D125. N124 is an L-citrulline binding site. Residues R128, S179, S188, E264, and Y276 each coordinate L-citrulline.

Belongs to the argininosuccinate synthase family. Type 1 subfamily. As to quaternary structure, homotetramer.

Its subcellular location is the cytoplasm. It carries out the reaction L-citrulline + L-aspartate + ATP = 2-(N(omega)-L-arginino)succinate + AMP + diphosphate + H(+). It functions in the pathway amino-acid biosynthesis; L-arginine biosynthesis; L-arginine from L-ornithine and carbamoyl phosphate: step 2/3. This chain is Argininosuccinate synthase, found in Jannaschia sp. (strain CCS1).